The sequence spans 1852 residues: MVGTLPAGHTPSHVQSSLPSLPAHLQSDTHLTAHLASRFHVGLPTARLSSHALISLNNYTSSSKGPDGGKEGSAMGETEDLARRAYTRLGARGENQAIVFLGESGAGKTTLRSHLLSSFLSFSSTPLSSKLSYAAFIFDTLTTTKSLTTPTASKAGLFLELQYDASSSVNPTLIGGKIIDHRLERSRIASVPTGERSFHVLYYLLAGTSAAEKAHLGLDSPIHVTTAGGRLSSADHKRWRYLGHPTQLKVGINDADGFQHFKTALRKLEFPRSEIAEICQILAAILHIGQLDFGSGQATLTGAEESGGYSHEGGETVTVVKNKDVLSIIAAFLGLGVGELEASFGYRTKTIHRERVTVMLDPKGARRSADELSRVLYSLLVAYVIENVNQRICAAEDSVANTVSIIDFPGFAQACSTGSTLDQLLNNAACESLYNFCLRSFFDRKADMLEREEVAVPATSYFDNTDAVRGLLKQGNGLLSILDDQTRRGRTDAQFVEAVRRRFENKNPAITAGASGSGNGYGMVSQNARSSFTVKHFAGEVDYSATGLLEENGEVISGDLMNLMKSTRSDFVRELFGQEALQTVAHPKEKTAIMQAQVSSKPLRMPSMARRKTSPASRLTFDATPAEDPYETESQTGSSAKNSSAKRKSGMLMGGMQCAAGQFLSSLDIVNKCLTSGNLNPYFVFCLKPNDRRIANQFDSKCVRTQIQTLGIAEISQRLRNADFSVFLPFAEFLGLAEVGNVVVGSDKEKSEVVLDEKRWPGNEARVGSTGVFLSERCWADLAKVGERVIPSFAAEDDGGDALLHPRTANYADSKVRLLNPSDHSPGAYIYGDESKQASNTSRDFDGRSDAGYSAFNSGDMFHNLETREQMLEKGNEKQMEEVDEVPVSGSRKRWMAIVWLLTFYIPTPAIRYIGRMKRKDIQIAWREKFAINLLIWLACAIAVFIIVGFPSLICPTQHVYSPAELSSHDGKDGHSSYTSIRGLVLDLGEFMDSHYPGIVPDSALKKYAGVDSTALFPVQVSALCLGKDGNVDPKVLLDYKPTNFSGSVTSTSSGDPNSVYHDFRYFRDDYRPDWYAEQMIYLRANYYKGWIGYSSEYLHTLASKSQNVASINGKIYDLTSYIAGGRRIQGREGDDTTGIDTDFMDSLVVDLFQQKAGEDITKYWEDLPLTPKLRVDMMDCLNNLFIVGHVDTRNSTQCQFARYFILAISVLICSVIVFKFFAALQFGKKNVPENLDKFIICQVPAYTEDEESLRRAIDSMARMQYDDKRKLLVVICDGMIIGQGNDRPTPRIVLDILGVPESVDPEPLSFESLGEGMKQHNMGKVYSGLYEVQGHIVPFLVVVKVGKPSEVSRPGNRGKRDSQMVLMRFLNRVHYNLPMSPMELEMHHHIRNIIGVNPTFYEFILQVDADTVVAPDAATRMVSSCLNDTRIIGVCGETSLTNAKTSAVTMIQVYEYYISHNLTKAFESLFGSITCLPGCFTMYRIRSAESGKPLFVSKEIVEAYSEIRVDTLHMKNLLHLGEDRYLTTLLLKHHPKFKTKYNFRAQAYTIAPESWTVFLSQRRRWINSTVHNLVELIPLQQLCGFCCFSMRFVVFIDLISTIIMPVTVAYIVYLIVWLVRDTSTIPWTSFLLLAAIYGLQAIIFIVRRKWEMIGWMIIYILAIPVYSLALPLYSFWHMDDFSWGNTRIITGEKGRKIVISDEGKFDPASIPKKRWEEYQAELWEAQTSRDDRSEISGISYGTKYHPATQSEYGFPGSRPMSQLELPRHMSRMSLAPSEMMSRHMDMELEDVNLPSDDAILSEIRDILRTADLMTVTKKNIKQELERRFGVNLDAKRPYINSATEAVLSGNL.

A disordered region spans residues 1 to 20; it reads MVGTLPAGHTPSHVQSSLPS. In terms of domain architecture, Myosin motor spans 1–787; sequence MVGTLPAGHT…CWADLAKVGE (787 aa). N-linked (GlcNAc...) asparagine glycosylation is present at asparagine 58. 102–109 is a binding site for ATP; it reads GESGAGKT. Residues 599–646 form a disordered region; that stretch reads SSKPLRMPSMARRKTSPASRLTFDATPAEDPYETESQTGSSAKNSSAK. Asparagine 642 carries N-linked (GlcNAc...) asparagine glycosylation. Residues 667-691 are actin-binding; it reads LDIVNKCLTSGNLNPYFVFCLKPND. An N-linked (GlcNAc...) asparagine glycan is attached at asparagine 840. The next 2 membrane-spanning stretches (helical) occupy residues 895–915 and 930–950; these read WMAI…RYIG and FAIN…IVGF. Residues 958–1017 form the Cytochrome b5 heme-binding domain; it reads QHVYSPAELSSHDGKDGHSSYTSIRGLVLDLGEFMDSHYPGIVPDSALKKYAGVDSTALF. N-linked (GlcNAc...) asparagine glycosylation is found at asparagine 1044 and asparagine 1195. A helical transmembrane segment spans residues 1205–1225; that stretch reads FILAISVLICSVIVFKFFAAL. Asparagine 1428, asparagine 1462, and asparagine 1568 each carry an N-linked (GlcNAc...) asparagine glycan. A run of 3 helical transmembrane segments spans residues 1600–1620, 1626–1646, and 1653–1673; these read ISTI…VWLV, IPWT…IIFI, and MIGW…ALPL. The region spanning 1794–1849 is the DEK-C domain; the sequence is LPSDDAILSEIRDILRTADLMTVTKKNIKQELERRFGVNLDAKRPYINSATEAVLS.

The protein in the N-terminal section; belongs to the TRAFAC class myosin-kinesin ATPase superfamily. Myosin family. This sequence in the C-terminal section; belongs to the chitin synthase family. Class V subfamily. As to quaternary structure, binds F-actin via its N-terminal myosin motor-like domain (MMD). Interacts with kibesin kinA.

The protein localises to the cell membrane. It is found in the cell septum. The protein resides in the cell tip. It catalyses the reaction [(1-&gt;4)-N-acetyl-beta-D-glucosaminyl](n) + UDP-N-acetyl-alpha-D-glucosamine = [(1-&gt;4)-N-acetyl-beta-D-glucosaminyl](n+1) + UDP + H(+). Polymerizes chitin, a structural polymer of the cell wall and septum, by transferring the sugar moiety of UDP-GlcNAc to the non-reducing end of the growing chitin polymer. Plays an important role in polarized hyphal cell wall synthesis and maintenance of cell wall integrity. Its role in growth and morphogenesis is particularly important under low osmotic conditions. The chain is Chitin synthase csmA from Emericella nidulans (Aspergillus nidulans).